A 144-amino-acid polypeptide reads, in one-letter code: Acidic phospholipase A2 S15-109 (144 aa).

The N-terminal stretch at Met-1–Ala-19 is a signal peptide. Positions Ser-20–Leu-27 are excised as a propeptide. 7 disulfide bridges follow: Cys-38/Cys-98, Cys-54/Cys-143, Cys-56/Cys-72, Cys-71/Cys-126, Cys-78/Cys-119, Cys-87/Cys-112, and Cys-105/Cys-117. Residues Tyr-55, Gly-57, and Gly-59 each contribute to the Ca(2+) site. His-75 is a catalytic residue. Asp-76 provides a ligand contact to Ca(2+). Asp-120 is a catalytic residue.

Belongs to the phospholipase A2 family. Group I subfamily. D49 sub-subfamily. Ca(2+) serves as cofactor. In terms of tissue distribution, expressed by the venom gland.

Its subcellular location is the secreted. The enzyme catalyses a 1,2-diacyl-sn-glycero-3-phosphocholine + H2O = a 1-acyl-sn-glycero-3-phosphocholine + a fatty acid + H(+). Snake venom phospholipase A2 (PLA2) that inhibits collagen-induced platelet aggregation. PLA2 catalyzes the calcium-dependent hydrolysis of the 2-acyl groups in 3-sn-phosphoglycerides. In Austrelaps superbus (Lowland copperhead snake), this protein is Acidic phospholipase A2 S15-109.